Consider the following 114-residue polypeptide: Protein ORF3 (114 aa).

2 hydrophobic regions span residues Cys6 to Cys22 and Ala33 to Leu53. The segment at Val28–Pro68 is interaction with host HPX. The tract at residues Val48–Pro72 is interaction with the capsid protein. The residue at position 71 (Ser71) is a Phosphoserine; by host. Residues Pro72–Arg114 form a homodimerization, and interaction with host AMBP/bikunin region. The interval Leu91–Arg114 is disordered. The interval Arg95–Val104 is interaction with host SRC, HCK, FYN, PIK3R3 and GRB2. The PTAP/PSAP motif signature appears at Pro96–Pro99.

This sequence belongs to the hepevirus ORF3 protein family. As to quaternary structure, forms homooligomers. Interacts with host SRC, HCK, FYN, PIK3R3 and GRB2 (via SH3 domain); binding does not activate the kinases. Interacts with host AMBP/bikunin and AMBP/alpha-1-microglobulin peptides. Interacts with host HPX/hemopexin. Interacts (when phosphorylated) with capsid protein ORF2. Interacts with host TSG101; this interaction plays a role in viral release from the host cell. Interacts with host SIRPA; this interaction down-regulates the phosphorylation of host IRF3. In terms of processing, palmitoylated in the N-terminus.

The protein resides in the host endoplasmic reticulum membrane. It is found in the host cytoplasm. The protein localises to the host cytoskeleton. Its subcellular location is the virion. It localises to the host cell membrane. Small multifunctional phosphoprotein involved in virion morphogenesis, egress and counteracting host innate immunity. Plays critical roles in the final steps of viral release by interacting with host TSG101, a member of the vacuolar protein-sorting pathway and using other cellular host proteins involved in vesicle formation pathway. Also acts as a viroporin and forms ion conductive pores allowing viral particle release. Impairs the generation of type I interferon by down-regulating host TLR3 and TLR7 as well as their downstream signaling pathways. Down-regulates the phosphorylation of host IRF3 via the interaction with host SIRP-alpha, thereby inhibiting IFN-I expression. Interacts with host microtubules. This chain is Protein ORF3, found in Homo sapiens (Human).